Here is a 415-residue protein sequence, read N- to C-terminus: Serine hydroxymethyltransferase (415 aa).

(6S)-5,6,7,8-tetrahydrofolate-binding positions include leucine 121 and 125 to 127; that span reads GHL. Residue lysine 230 is modified to N6-(pyridoxal phosphate)lysine.

The protein belongs to the SHMT family. As to quaternary structure, homodimer. Requires pyridoxal 5'-phosphate as cofactor.

It is found in the cytoplasm. It catalyses the reaction (6R)-5,10-methylene-5,6,7,8-tetrahydrofolate + glycine + H2O = (6S)-5,6,7,8-tetrahydrofolate + L-serine. It participates in one-carbon metabolism; tetrahydrofolate interconversion. It functions in the pathway amino-acid biosynthesis; glycine biosynthesis; glycine from L-serine: step 1/1. Its function is as follows. Catalyzes the reversible interconversion of serine and glycine with tetrahydrofolate (THF) serving as the one-carbon carrier. This reaction serves as the major source of one-carbon groups required for the biosynthesis of purines, thymidylate, methionine, and other important biomolecules. Also exhibits THF-independent aldolase activity toward beta-hydroxyamino acids, producing glycine and aldehydes, via a retro-aldol mechanism. In Syntrophomonas wolfei subsp. wolfei (strain DSM 2245B / Goettingen), this protein is Serine hydroxymethyltransferase.